A 328-amino-acid chain; its full sequence is Ornithine transcarbamylase, mitochondrial (328 aa).

Residues 1-6 constitute a mitochondrion transit peptide; the sequence is GGQPLQ. K44 is modified (N6-acetyllysine; alternate). K44 carries the post-translational modification N6-succinyllysine; alternate. The residue at position 54 (K54) is an N6-succinyllysine. K62 is modified (N6-acetyllysine; alternate). An N6-succinyllysine; alternate modification is found at K62. Residue 64 to 68 coordinates carbamoyl phosphate; sequence STRTR. At S107 the chain carries Phosphoserine. Carbamoyl phosphate is bound at residue R115. L-ornithine is bound at residue R115. K118 carries the post-translational modification N6-acetyllysine; alternate. K118 carries the N6-succinyllysine; alternate modification. Carbamoyl phosphate is bound at residue H142. L-ornithine is bound at residue N173. N6-acetyllysine; alternate is present on residues K195, K205, and K212. K195, K205, and K212 each carry N6-succinyllysine; alternate. L-ornithine is bound at residue 237-241; the sequence is DTWIS. N6-succinyllysine is present on residues K248 and K263. 276–279 contacts L-ornithine; the sequence is HCLP. C277 is an active-site residue. An N6-acetyllysine; alternate modification is found at K281. An N6-succinyllysine; alternate modification is found at K281. R304 contributes to the carbamoyl phosphate binding site. R304 is a binding site for L-ornithine.

This sequence belongs to the aspartate/ornithine carbamoyltransferase superfamily. OTCase family. In terms of assembly, homotrimer. In terms of processing, acetylation at Lys-62 negatively regulates ornithine carbamoyltransferase activity in response to nutrient signals.

The protein resides in the mitochondrion matrix. The catalysed reaction is carbamoyl phosphate + L-ornithine = L-citrulline + phosphate + H(+). The protein operates within nitrogen metabolism; urea cycle; L-citrulline from L-ornithine and carbamoyl phosphate: step 1/1. With respect to regulation, negatively regulated by lysine acetylation. Catalyzes the second step of the urea cycle, the condensation of carbamoyl phosphate with L-ornithine to form L-citrulline. The urea cycle ensures the detoxification of ammonia by converting it to urea for excretion. The sequence is that of Ornithine transcarbamylase, mitochondrial from Sus scrofa (Pig).